A 156-amino-acid chain; its full sequence is Small ribosomal subunit protein uS7 (156 aa).

It belongs to the universal ribosomal protein uS7 family. As to quaternary structure, part of the 30S ribosomal subunit. Contacts proteins S9 and S11.

Its function is as follows. One of the primary rRNA binding proteins, it binds directly to 16S rRNA where it nucleates assembly of the head domain of the 30S subunit. Is located at the subunit interface close to the decoding center, probably blocks exit of the E-site tRNA. In Mycolicibacterium gilvum (strain PYR-GCK) (Mycobacterium gilvum (strain PYR-GCK)), this protein is Small ribosomal subunit protein uS7.